Here is a 258-residue protein sequence, read N- to C-terminus: Acetylglutamate kinase (258 aa).

Substrate contacts are provided by residues 44-45, R66, and N158; that span reads GG. Residues 181–186 and 209–211 each bind ATP; these read DVSGIL and IIT.

The protein belongs to the acetylglutamate kinase family. ArgB subfamily. As to quaternary structure, homodimer.

It is found in the cytoplasm. It catalyses the reaction N-acetyl-L-glutamate + ATP = N-acetyl-L-glutamyl 5-phosphate + ADP. It functions in the pathway amino-acid biosynthesis; L-arginine biosynthesis; N(2)-acetyl-L-ornithine from L-glutamate: step 2/4. Catalyzes the ATP-dependent phosphorylation of N-acetyl-L-glutamate. This is Acetylglutamate kinase from Shigella flexneri.